The following is a 921-amino-acid chain: MEYKDTLLMPKTDFPMRGNLPNKEPEWQAKWEEEKLYEKIQEKNAGRPTYILHDGPPYANGELHMGHALNKTIKDIIVRYKSMAGFSSPYVPGWDTHGLPIETAIAKKGVKRKEMSIAEFRKLCAEYAMKQVDGQRTGFKRLGINGDWENPYITLLPEYEAEQIKVFGEMAKKGYIYKGKKPVYWSPSSESALAEAEIEYQDKTSASIFVAFKVTDGKGVLDEGTNIVIWTTTPWTIPANMGITVNPDLDYVVIESAGEKYVVAEALLPSLREKLGFEDATVVKTVRGSELDRVVTKHPFYDRDSLVMNGEHATAEAGTGAVHTAPGHGEDDFLIGKKYDLEILAPLDDRGVFTEEAPGFEGVFYDTANKMVTEKLEEVGALLKMEFITHSYPHDWRTKKPVIFRATAQWFASIDAFRDDLLAAVKGVNWTPAWGETRLFNMVRDRGDWVISRQRAWGVPLPIFYAENGEAIITDETINHISELFREHGSNVWFERDVKDLLPAGFTHPGSPNGEFTKETDIMDVWFDSGSSHQAVLNARPELSRPADLYMEGSDQYRGWFNSSLTTAVAITGEAPYRNVLSHGFALDGEGRKMSKSLGNTLLPGKVIKQLGADIVRLWVASVDYQADVRVSDEILKQVSEVYRKIRNTMRFLLGNINDFNPTTNTVSYENLREVDKYMLIKLNDLVKNVKDSYEAFEFSTIYHQINNFCTVELSQFYMDFAKDVVYIEAADSHDRRAMQTVFYEAVVTLTKLLAPILPHTTEEVWNSLIGEGAESIHLQDLPDVKVLANSEEITAKWDAFMQIRDNVQKALEFARNEKLIGKSMLAKVTLYVDGEAKTLFDSLEGDFAQLFIVSDFELVEGLENAPESAFKSNQVAVQITVAEGETCERCRVVKKDVGVNPKHPTLCGRCADIVVKHYEA.

A 'HIGH' region motif is present at residues 57-67; the sequence is PYANGELHMGH. An L-isoleucyl-5'-AMP-binding site is contributed by E552. The 'KMSKS' region signature appears at 593–597; it reads KMSKS. K596 is a binding site for ATP. Positions 888, 891, 908, and 911 each coordinate Zn(2+).

This sequence belongs to the class-I aminoacyl-tRNA synthetase family. IleS type 1 subfamily. As to quaternary structure, monomer. It depends on Zn(2+) as a cofactor.

It is found in the cytoplasm. It catalyses the reaction tRNA(Ile) + L-isoleucine + ATP = L-isoleucyl-tRNA(Ile) + AMP + diphosphate. Its function is as follows. Catalyzes the attachment of isoleucine to tRNA(Ile). As IleRS can inadvertently accommodate and process structurally similar amino acids such as valine, to avoid such errors it has two additional distinct tRNA(Ile)-dependent editing activities. One activity is designated as 'pretransfer' editing and involves the hydrolysis of activated Val-AMP. The other activity is designated 'posttransfer' editing and involves deacylation of mischarged Val-tRNA(Ile). In Listeria monocytogenes serovar 1/2a (strain ATCC BAA-679 / EGD-e), this protein is Isoleucine--tRNA ligase.